A 178-amino-acid chain; its full sequence is Fatty-acid and retinol-binding protein 1 (178 aa).

The signal sequence occupies residues 1-16 (MYHRLILLALVGTTMA). 2 coiled-coil regions span residues 67–89 (DAAL…ELRN) and 130–153 (KQAA…ELKV).

This sequence belongs to the fatty-acid and retinol-binding protein (FARBP) family. Not glycosylated.

It is found in the secreted. Its function is as follows. Binds retinol and different fatty acids. This chain is Fatty-acid and retinol-binding protein 1, found in Brugia pahangi (Filarial nematode worm).